A 518-amino-acid chain; its full sequence is Gypsy retrotransposon integrase-like protein 1 (518 aa).

In terms of domain architecture, Integrase catalytic spans 135–293; sequence VVGNPWSVVT…PYFQMFNRNP (159 aa). Residues 326–348 form a disordered region; the sequence is NQTPAAGQMESSTSEELSKSKVA. Residue Ser498 is modified to Phosphoserine.

The polypeptide is Gypsy retrotransposon integrase-like protein 1 (GIN1) (Rattus norvegicus (Rat)).